The sequence spans 323 residues: Transaldolase (323 aa).

K133 functions as the Schiff-base intermediate with substrate in the catalytic mechanism.

This sequence belongs to the transaldolase family. Type 1 subfamily. As to quaternary structure, monomer.

The enzyme catalyses D-sedoheptulose 7-phosphate + D-glyceraldehyde 3-phosphate = D-erythrose 4-phosphate + beta-D-fructose 6-phosphate. The protein operates within carbohydrate degradation; pentose phosphate pathway; D-glyceraldehyde 3-phosphate and beta-D-fructose 6-phosphate from D-ribose 5-phosphate and D-xylulose 5-phosphate (non-oxidative stage): step 2/3. Its function is as follows. Important for the balance of metabolites in the pentose-phosphate pathway. Involved in xylose fermentation to ethanol. This is Transaldolase from Gibberella intermedia (Bulb rot disease fungus).